The sequence spans 335 residues: Probable pectinesterase 29 (335 aa).

A signal peptide spans 1–24 (MGTHRIFIGLIALCCFCLPHLIEA). A glycan (N-linked (GlcNAc...) asparagine) is linked at asparagine 43. Aspartate 166 functions as the Proton donor in the catalytic mechanism. Aspartate 187 acts as the Nucleophile in catalysis. Substrate-binding residues include arginine 248 and tryptophan 250. Residue asparagine 262 is glycosylated (N-linked (GlcNAc...) asparagine).

Belongs to the pectinesterase family. Expressed in flower buds.

It localises to the secreted. The protein localises to the cell wall. The enzyme catalyses [(1-&gt;4)-alpha-D-galacturonosyl methyl ester](n) + n H2O = [(1-&gt;4)-alpha-D-galacturonosyl](n) + n methanol + n H(+). It functions in the pathway glycan metabolism; pectin degradation; 2-dehydro-3-deoxy-D-gluconate from pectin: step 1/5. Functionally, acts in the modification of cell walls via demethylesterification of cell wall pectin. This chain is Probable pectinesterase 29 (PME29), found in Arabidopsis thaliana (Mouse-ear cress).